A 203-amino-acid polypeptide reads, in one-letter code: dITP/XTP pyrophosphatase (203 aa).

Position 7–12 (7–12 (TGNRDK)) interacts with substrate. The Proton acceptor role is filled by Asp73. Asp73 contributes to the Mg(2+) binding site. Substrate contacts are provided by residues Ser74, 155–158 (FGYD), Lys178, and 183–184 (HR).

Belongs to the HAM1 NTPase family. In terms of assembly, homodimer. It depends on Mg(2+) as a cofactor.

It catalyses the reaction XTP + H2O = XMP + diphosphate + H(+). The catalysed reaction is dITP + H2O = dIMP + diphosphate + H(+). The enzyme catalyses ITP + H2O = IMP + diphosphate + H(+). Functionally, pyrophosphatase that catalyzes the hydrolysis of nucleoside triphosphates to their monophosphate derivatives, with a high preference for the non-canonical purine nucleotides XTP (xanthosine triphosphate), dITP (deoxyinosine triphosphate) and ITP. Seems to function as a house-cleaning enzyme that removes non-canonical purine nucleotides from the nucleotide pool, thus preventing their incorporation into DNA/RNA and avoiding chromosomal lesions. The chain is dITP/XTP pyrophosphatase from Wolinella succinogenes (strain ATCC 29543 / DSM 1740 / CCUG 13145 / JCM 31913 / LMG 7466 / NCTC 11488 / FDC 602W) (Vibrio succinogenes).